The chain runs to 170 residues: Urease accessory protein UreE (170 aa).

The tract at residues 144–170 (GGHSHDDHDHHHGHHEHDHEHHHHHHD) is disordered. A compositionally biased stretch (basic and acidic residues) spans 146–162 (HSHDDHDHHHGHHEHDH).

The protein belongs to the UreE family.

It is found in the cytoplasm. Involved in urease metallocenter assembly. Binds nickel. Probably functions as a nickel donor during metallocenter assembly. The chain is Urease accessory protein UreE from Brucella anthropi (strain ATCC 49188 / DSM 6882 / CCUG 24695 / JCM 21032 / LMG 3331 / NBRC 15819 / NCTC 12168 / Alc 37) (Ochrobactrum anthropi).